A 324-amino-acid polypeptide reads, in one-letter code: Putative S-adenosyl-L-methionine-dependent methyltransferase MUL_0818 (324 aa).

Residues Asp-138 and 167–168 each bind S-adenosyl-L-methionine; that span reads DL.

It belongs to the UPF0677 family.

Exhibits S-adenosyl-L-methionine-dependent methyltransferase activity. This is Putative S-adenosyl-L-methionine-dependent methyltransferase MUL_0818 from Mycobacterium ulcerans (strain Agy99).